The following is a 206-amino-acid chain: Translocation protein SEC66 (206 aa).

Residues 1-27 (MSEFNETKFSNNGTFFETEEPIVETKS) lie on the Lumenal side of the membrane. Asparagine 5 and asparagine 12 each carry an N-linked (GlcNAc...) asparagine glycan. The chain crosses the membrane as a helical; Signal-anchor for type II membrane protein span at residues 28-48 (ISVYTPLIYVFILVVSLVMFA). Over 49–206 (SSYRKKQAKK…KINNDGRLVN (158 aa)) the chain is Cytoplasmic.

To S.pombe SpBC409.21. As to quaternary structure, component of the heterotetrameric Sec62/63complex composed of SEC62, SEC63, SEC66 and SEC72. The Sec62/63 complex associates with the Sec61 complex to form the Sec complex. Part of a complex consisting of KAR2, SEC63, SEC66 and SEC72.

Its subcellular location is the endoplasmic reticulum membrane. Acts as a component of the Sec62/63 complex which is involved in SRP-independent post-translational translocation across the endoplasmic reticulum (ER) and functions together with the Sec61 complex and KAR2 in a channel-forming translocon complex. A cycle of assembly and disassembly of Sec62/63 complex from SEC61 may govern the activity of the translocon. SEC66 is required to attach or retain SEC72 in the SEC63 complex. It is essential for growth at elevated temperatures. This is Translocation protein SEC66 (SEC66) from Saccharomyces cerevisiae (strain ATCC 204508 / S288c) (Baker's yeast).